Here is a 328-residue protein sequence, read N- to C-terminus: Tetraacyldisaccharide 4'-kinase (328 aa).

Residue 55–62 (TAGGNGKT) coordinates ATP.

The protein belongs to the LpxK family.

The enzyme catalyses a lipid A disaccharide + ATP = a lipid IVA + ADP + H(+). Its pathway is glycolipid biosynthesis; lipid IV(A) biosynthesis; lipid IV(A) from (3R)-3-hydroxytetradecanoyl-[acyl-carrier-protein] and UDP-N-acetyl-alpha-D-glucosamine: step 6/6. In terms of biological role, transfers the gamma-phosphate of ATP to the 4'-position of a tetraacyldisaccharide 1-phosphate intermediate (termed DS-1-P) to form tetraacyldisaccharide 1,4'-bis-phosphate (lipid IVA). This is Tetraacyldisaccharide 4'-kinase from Escherichia coli (strain K12 / MC4100 / BW2952).